The following is a 591-amino-acid chain: Aspartate--tRNA(Asp/Asn) ligase (591 aa).

Residue E176 coordinates L-aspartate. The tract at residues 200 to 203 (QLFK) is aspartate. R222 lines the L-aspartate pocket. ATP contacts are provided by residues 222–224 (RDE) and Q231. Position 450 (H450) interacts with L-aspartate. E484 provides a ligand contact to ATP. Residue R491 participates in L-aspartate binding. ATP is bound at residue 536–539 (GLDR).

Belongs to the class-II aminoacyl-tRNA synthetase family. Type 1 subfamily. Homodimer.

It localises to the cytoplasm. The catalysed reaction is tRNA(Asx) + L-aspartate + ATP = L-aspartyl-tRNA(Asx) + AMP + diphosphate. Functionally, aspartyl-tRNA synthetase with relaxed tRNA specificity since it is able to aspartylate not only its cognate tRNA(Asp) but also tRNA(Asn). Reaction proceeds in two steps: L-aspartate is first activated by ATP to form Asp-AMP and then transferred to the acceptor end of tRNA(Asp/Asn). The sequence is that of Aspartate--tRNA(Asp/Asn) ligase from Bacillus cereus (strain ATCC 14579 / DSM 31 / CCUG 7414 / JCM 2152 / NBRC 15305 / NCIMB 9373 / NCTC 2599 / NRRL B-3711).